A 138-amino-acid chain; its full sequence is Small ribosomal subunit protein bS6 (138 aa).

Residues threonine 97–asparagine 121 show a composition bias toward basic and acidic residues. Positions threonine 97–glutamate 138 are disordered. Residues asparagine 126–glutamate 138 show a composition bias toward acidic residues.

This sequence belongs to the bacterial ribosomal protein bS6 family.

In terms of biological role, binds together with bS18 to 16S ribosomal RNA. This Stutzerimonas stutzeri (strain A1501) (Pseudomonas stutzeri) protein is Small ribosomal subunit protein bS6.